The sequence spans 386 residues: Glucose-1-phosphate adenylyltransferase (386 aa).

Residues Tyr-100, Gly-165, Glu-180–Lys-181, and Ser-191 contribute to the alpha-D-glucose 1-phosphate site.

The protein belongs to the bacterial/plant glucose-1-phosphate adenylyltransferase family. Homotetramer.

The catalysed reaction is alpha-D-glucose 1-phosphate + ATP + H(+) = ADP-alpha-D-glucose + diphosphate. It participates in glycan biosynthesis; glycogen biosynthesis. In terms of biological role, involved in the biosynthesis of ADP-glucose, a building block required for the elongation reactions to produce glycogen. Catalyzes the reaction between ATP and alpha-D-glucose 1-phosphate (G1P) to produce pyrophosphate and ADP-Glc. The chain is Glucose-1-phosphate adenylyltransferase from Clostridium botulinum (strain Eklund 17B / Type B).